The primary structure comprises 241 residues: Neuromodulin (241 aa).

Positions 1–26 are enriched in basic and acidic residues; sequence TKQVEKNEDGDQKIEQDGIKPEDKAH. The disordered stretch occupies residues 1 to 241; that stretch reads TKQVEKNEDG…EESKADQENA (241 aa). Residues 25-54 enclose the IQ domain; the sequence is AHKAATKIQASFRGHITRKKLKGEKKGDAP. 2 stretches are compositionally biased toward low complexity: residues 80-95 and 118-131; these read APAA…AQQE and SEQP…PAAS. 2 stretches are compositionally biased toward basic and acidic residues: residues 132 to 147 and 159 to 171; these read SEEK…REST and KADE…EPKQ. The span at 172–198 shows a compositional bias: low complexity; it reads ADVPAADTTATTTPAAEDATAKATAQP. Basic and acidic residues-rich tracts occupy residues 208 to 220 and 232 to 241; these read TEEK…ETKP and EESKADQENA.

The protein belongs to the neuromodulin family. As to quaternary structure, binds calmodulin with a greater affinity in the absence of Ca(2+) than in its presence. Palmitoylated. Palmitoylation is essential for plasma membrane association.

The protein localises to the cell membrane. Its subcellular location is the cell projection. It localises to the growth cone membrane. It is found in the synapse. The protein resides in the filopodium membrane. In terms of biological role, this protein is associated with nerve growth. It is a major component of the motile 'growth cones' that form the tips of elongating axons. Plays a role in axonal and dendritic filopodia induction. This chain is Neuromodulin (GAP43), found in Serinus canaria (Island canary).